The sequence spans 426 residues: Glucan endo-1,3-beta-glucosidase 11 (426 aa).

Positions 1-30 (MELTSFHRSSLLFLISLTLIILPTTTTSIG) are cleaved as a signal peptide. N112 carries N-linked (GlcNAc...) asparagine glycosylation. The Proton donor role is filled by E121. N126 carries an N-linked (GlcNAc...) asparagine glycan. The Nucleophile role is filled by E266. The span at 360-372 (GGGTGGGNSSSGG) shows a compositional bias: gly residues. The tract at residues 360 to 389 (GGGTGGGNSSSGGGRDKSPVFPVSPVAPDS) is disordered. An N-linked (GlcNAc...) asparagine glycan is attached at N367. S398 is lipidated: GPI-anchor amidated serine. Positions 399–426 (ASPVTGKRKGKGAILSLVVSMLLARHLL) are cleaved as a propeptide — removed in mature form.

This sequence belongs to the glycosyl hydrolase 17 family.

It localises to the secreted. The protein resides in the cell wall. The protein localises to the cell membrane. The catalysed reaction is Hydrolysis of (1-&gt;3)-beta-D-glucosidic linkages in (1-&gt;3)-beta-D-glucans.. This Arabidopsis thaliana (Mouse-ear cress) protein is Glucan endo-1,3-beta-glucosidase 11.